The following is a 229-amino-acid chain: UPF0173 metal-dependent hydrolase Hbut_0886 (229 aa).

It belongs to the UPF0173 family.

The polypeptide is UPF0173 metal-dependent hydrolase Hbut_0886 (Hyperthermus butylicus (strain DSM 5456 / JCM 9403 / PLM1-5)).